The sequence spans 491 residues: Putative pentatricopeptide repeat-containing protein At1g02420 (491 aa).

PPR repeat units follow at residues 179-209, 210-244, 245-279, 280-314, 315-349, 350-384, 385-419, and 420-454; these read DTAC…LKHQ, FQPD…GLKP, DVVT…EETP, DVIT…GCYP, DVAA…GLSP, NATT…ECLP, NTQS…GFGS, and YSLV…GHRP.

The protein belongs to the PPR family. P subfamily.

This is Putative pentatricopeptide repeat-containing protein At1g02420 from Arabidopsis thaliana (Mouse-ear cress).